The sequence spans 224 residues: CMRF35-like molecule 6 (224 aa).

An N-terminal signal peptide occupies residues Met-1–Pro-20. The Extracellular segment spans residues Gly-21–Arg-183. The region spanning Tyr-22–Ser-130 is the Ig-like V-type domain. Disulfide bonds link Cys-43/Cys-110 and Cys-57/Cys-65. N-linked (GlcNAc...) asparagine glycans are attached at residues Asn-90 and Asn-99. A compositionally biased stretch (polar residues) spans Thr-136–Pro-151. The tract at residues Thr-136–His-174 is disordered. Residues Phe-184–Trp-204 traverse the membrane as a helical segment. Residues Val-205 to Gln-224 are Cytoplasmic-facing.

Belongs to the CD300 family. As to expression, present on the surface of monocytes, neutrophils, a proportion of peripheral blood T- and B-lymphocytes and lymphocytic cell lines.

The protein resides in the cell membrane. This chain is CMRF35-like molecule 6 (CD300C), found in Homo sapiens (Human).